The primary structure comprises 445 residues: N-succinylarginine dihydrolase (445 aa).

Substrate is bound by residues 19 to 28 (AGLSFGNVAS), Asn110, and 137 to 138 (HR). The active site involves Glu174. Substrate is bound at residue Arg214. His250 is a catalytic residue. Residues Asp252 and Asn363 each contribute to the substrate site. The active-site Nucleophile is the Cys369.

It belongs to the succinylarginine dihydrolase family. Homodimer.

The enzyme catalyses N(2)-succinyl-L-arginine + 2 H2O + 2 H(+) = N(2)-succinyl-L-ornithine + 2 NH4(+) + CO2. Its pathway is amino-acid degradation; L-arginine degradation via AST pathway; L-glutamate and succinate from L-arginine: step 2/5. Its function is as follows. Catalyzes the hydrolysis of N(2)-succinylarginine into N(2)-succinylornithine, ammonia and CO(2). This Shewanella sediminis (strain HAW-EB3) protein is N-succinylarginine dihydrolase.